A 269-amino-acid chain; its full sequence is Alcohol dehydrogenase-related 31 kDa protein (269 aa).

11 to 34 (YVADCGGIALETCKVLMTKNIAKL) contacts NAD(+). Ser139 contacts substrate. Catalysis depends on Tyr152, which acts as the Proton acceptor.

Belongs to the short-chain dehydrogenases/reductases (SDR) family.

The chain is Alcohol dehydrogenase-related 31 kDa protein (Adhr) from Drosophila lebanonensis (Fruit fly).